Here is a 373-residue protein sequence, read N- to C-terminus: Diels-Alderase (373 aa).

Belongs to the Diels-Alderase family.

The catalysed reaction is (5S)-3-[(2E,6R,8E,10E,12E)-2,6-dimethyltetradeca-2,8,10,12-tetraenoyl]-5-(hydroxymethyl)pyrrolidine-2,4-dione = trichosetin. Its pathway is mycotoxin biosynthesis. Functionally, hybrid PKS-NRPS synthetase; part of the gene cluster that mediates the biosynthesis of trichosetin, a trans-fused decalin-containing tetramic acid with antimicrobial activity. The PKS module of PKS-NRPS1 together with the enoylreductase (ER) catalyze the formation of the polyketide unit which is then conjugated to L-serine by the condensation domain of the PKS-NRPS1 NRPS module. Activity of the Dieckmann cyclase domain (RED) results in release of the Dieckmann product intermediate. Diels-Alderase (DA) is involved in endo-selective Diels-Alder cycloaddition to form the decalin ring, leading to the production of N-desmethylequisetin also called trichosetin. The cluster does not contain the equisetin N-methyltransferase and consequently, trichosetin is isolated as final product. This is Diels-Alderase from Gibberella fujikuroi (strain CBS 195.34 / IMI 58289 / NRRL A-6831) (Bakanae and foot rot disease fungus).